A 270-amino-acid chain; its full sequence is Acyl-[acyl-carrier-protein]--UDP-N-acetylglucosamine O-acyltransferase (270 aa).

The protein belongs to the transferase hexapeptide repeat family. LpxA subfamily. As to quaternary structure, homotrimer.

The protein localises to the cytoplasm. It carries out the reaction a (3R)-hydroxyacyl-[ACP] + UDP-N-acetyl-alpha-D-glucosamine = a UDP-3-O-[(3R)-3-hydroxyacyl]-N-acetyl-alpha-D-glucosamine + holo-[ACP]. Its pathway is glycolipid biosynthesis; lipid IV(A) biosynthesis; lipid IV(A) from (3R)-3-hydroxytetradecanoyl-[acyl-carrier-protein] and UDP-N-acetyl-alpha-D-glucosamine: step 1/6. In terms of biological role, involved in the biosynthesis of lipid A, a phosphorylated glycolipid that anchors the lipopolysaccharide to the outer membrane of the cell. The polypeptide is Acyl-[acyl-carrier-protein]--UDP-N-acetylglucosamine O-acyltransferase (Helicobacter pylori (strain HPAG1)).